The following is a 258-amino-acid chain: UDP-2,3-diacylglucosamine hydrolase (258 aa).

Aspartate 15, histidine 17, aspartate 48, asparagine 88, and histidine 123 together coordinate Mn(2+). Residue 88–89 participates in substrate binding; that stretch reads NR. Residues aspartate 131, serine 169, asparagine 173, lysine 176, and histidine 204 each coordinate substrate. 2 residues coordinate Mn(2+): histidine 204 and histidine 206.

Belongs to the LpxH family. Mn(2+) is required as a cofactor.

It localises to the cell inner membrane. The catalysed reaction is UDP-2-N,3-O-bis[(3R)-3-hydroxytetradecanoyl]-alpha-D-glucosamine + H2O = 2-N,3-O-bis[(3R)-3-hydroxytetradecanoyl]-alpha-D-glucosaminyl 1-phosphate + UMP + 2 H(+). It participates in glycolipid biosynthesis; lipid IV(A) biosynthesis; lipid IV(A) from (3R)-3-hydroxytetradecanoyl-[acyl-carrier-protein] and UDP-N-acetyl-alpha-D-glucosamine: step 4/6. Its function is as follows. Hydrolyzes the pyrophosphate bond of UDP-2,3-diacylglucosamine to yield 2,3-diacylglucosamine 1-phosphate (lipid X) and UMP by catalyzing the attack of water at the alpha-P atom. Involved in the biosynthesis of lipid A, a phosphorylated glycolipid that anchors the lipopolysaccharide to the outer membrane of the cell. The sequence is that of UDP-2,3-diacylglucosamine hydrolase from Bordetella bronchiseptica (strain ATCC BAA-588 / NCTC 13252 / RB50) (Alcaligenes bronchisepticus).